The primary structure comprises 190 residues: Endo-1,4-beta-xylanase (190 aa).

The GH11 domain maps to 1–190 (QTIGPGTGYS…SSGSASITVS (190 aa)). Catalysis depends on Glu-86, which acts as the Nucleophile. Glu-177 (proton donor) is an active-site residue.

The protein belongs to the glycosyl hydrolase 11 (cellulase G) family.

The catalysed reaction is Endohydrolysis of (1-&gt;4)-beta-D-xylosidic linkages in xylans.. The protein operates within glycan degradation; xylan degradation. This chain is Endo-1,4-beta-xylanase, found in Trichoderma harzianum (Hypocrea lixii).